We begin with the raw amino-acid sequence, 339 residues long: GTPase Obg (339 aa).

The region spanning 1 to 159 is the Obg domain; the sequence is MKFLDQAKVY…RALWLRLKLI (159 aa). The 168-residue stretch at 160 to 327 folds into the OBG-type G domain; the sequence is ADGGIIGLPN…VLRSVAHVIE (168 aa). Residues 166-173, 191-195, 212-215, 279-282, and 308-310 contribute to the GTP site; these read GLPNAGKS, FTTLY, DIPG, SQVD, and SAV. Mg(2+) is bound by residues S173 and T193.

The protein belongs to the TRAFAC class OBG-HflX-like GTPase superfamily. OBG GTPase family. Monomer. Requires Mg(2+) as cofactor.

The protein localises to the cytoplasm. Functionally, an essential GTPase which binds GTP, GDP and possibly (p)ppGpp with moderate affinity, with high nucleotide exchange rates and a fairly low GTP hydrolysis rate. Plays a role in control of the cell cycle, stress response, ribosome biogenesis and in those bacteria that undergo differentiation, in morphogenesis control. In Bartonella bacilliformis (strain ATCC 35685 / KC583 / Herrer 020/F12,63), this protein is GTPase Obg.